The chain runs to 683 residues: Long-chain-fatty-acid--CoA ligase 5 (683 aa).

Residues 12 to 32 (LPTPALICILTFGAAIFLWLI) form a helical; Signal-anchor for type III membrane protein membrane-spanning segment. I32 is modified (phosphoserine). At 33–683 (TRPQPVLPLL…IDSLYEHIQD (651 aa)) the chain is on the cytoplasmic side. An N6-acetyllysine modification is found at K361.

It belongs to the ATP-dependent AMP-binding enzyme family. The cofactor is Mg(2+).

Its subcellular location is the mitochondrion. It localises to the endoplasmic reticulum. It is found in the mitochondrion outer membrane. The protein resides in the endoplasmic reticulum membrane. The protein localises to the cell membrane. The catalysed reaction is a long-chain fatty acid + ATP + CoA = a long-chain fatty acyl-CoA + AMP + diphosphate. It catalyses the reaction (5Z,8Z,11Z,14Z)-eicosatetraenoate + ATP + CoA = (5Z,8Z,11Z,14Z)-eicosatetraenoyl-CoA + AMP + diphosphate. The enzyme catalyses hexadecanoate + ATP + CoA = hexadecanoyl-CoA + AMP + diphosphate. It carries out the reaction (E)-hexadec-2-enoate + ATP + CoA = (2E)-hexadecenoyl-CoA + AMP + diphosphate. The catalysed reaction is 15-hydroxy-(5Z,8Z,11Z,13E)-eicosatetraenoate + ATP + CoA = 15-hydroxy-(5Z,8Z,11Z,13E)-eicosatetraenoyl-CoA + AMP + diphosphate. It catalyses the reaction 12-hydroxy-(5Z,8Z,10E,14Z)-eicosatetraenoate + ATP + CoA = 12-hydroxy-(5Z,8Z,10E,14Z)-eicosatetraenoyl-CoA + AMP + diphosphate. The enzyme catalyses 5-hydroxy-(6E,8Z,11Z,14Z)-eicosatetraenoate + ATP + CoA = 5-hydroxy-(6E,8Z,11Z,14Z)-eicosatetraenoyl-CoA + AMP + diphosphate. It carries out the reaction 14,15-epoxy-(5Z,8Z,11Z)-eicosatrienoate + ATP + CoA = 14,15-epoxy-(5Z,8Z,11Z)-eicosatrienoyl-CoA + AMP + diphosphate. The catalysed reaction is 11,12-epoxy-(5Z,8Z,14Z)-eicosatrienoate + ATP + CoA = 11,12-epoxy-(5Z,8Z,14Z)-eicosatrienoyl-CoA + AMP + diphosphate. It catalyses the reaction (9Z)-octadecenoate + ATP + CoA = (9Z)-octadecenoyl-CoA + AMP + diphosphate. In terms of biological role, catalyzes the conversion of long-chain fatty acids to their active form acyl-CoAs for both synthesis of cellular lipids, and degradation via beta-oxidation. ACSL5 may activate fatty acids from exogenous sources for the synthesis of triacylglycerol destined for intracellular storage. Utilizes a wide range of saturated fatty acids with a preference for C16-C18 unsaturated fatty acids. It was suggested that it may also stimulate fatty acid oxidation. At the villus tip of the crypt-villus axis of the small intestine may sensitize epithelial cells to apoptosis specifically triggered by the death ligand TRAIL. May have a role in the survival of glioma cells. This Homo sapiens (Human) protein is Long-chain-fatty-acid--CoA ligase 5.